A 177-amino-acid polypeptide reads, in one-letter code: Coatomer subunit zeta-1 (177 aa).

Met1 carries the N-acetylmethionine modification.

The protein belongs to the adaptor complexes small subunit family. Oligomeric complex that consists of at least the alpha, beta, beta', gamma, delta, epsilon and zeta subunits.

The protein localises to the cytoplasm. It localises to the golgi apparatus membrane. It is found in the cytoplasmic vesicle. Its subcellular location is the COPI-coated vesicle membrane. Its function is as follows. The coatomer is a cytosolic protein complex that binds to dilysine motifs and reversibly associates with Golgi non-clathrin-coated vesicles, which further mediate biosynthetic protein transport from the ER, via the Golgi up to the trans Golgi network. Coatomer complex is required for budding from Golgi membranes, and is essential for the retrograde Golgi-to-ER transport of dilysine-tagged proteins. The zeta subunit may be involved in regulating the coat assembly and, hence, the rate of biosynthetic protein transport due to its association-dissociation properties with the coatomer complex. This Homo sapiens (Human) protein is Coatomer subunit zeta-1 (COPZ1).